Reading from the N-terminus, the 62-residue chain is LKCHNTQLPFIYKTCPEGKNLCFKATLKKFPLKIPIKRGCADNCPKNSALLKYVCCSTDKCN.

4 disulfide bridges follow: Cys3-Cys22, Cys15-Cys40, Cys44-Cys55, and Cys56-Cys61.

Belongs to the three-finger toxin family. Short-chain subfamily. Orphan group XV sub-subfamily. Expressed by the venom gland.

The protein localises to the secreted. Its subcellular location is the target cell membrane. Its function is as follows. Has low cytotoxic activity. This is Cytotoxin homolog from Naja kaouthia (Monocled cobra).